The chain runs to 74 residues: MIGLIVVPILFAIKGIVVGVQKVKKKFGKHSNTKDQKEDKDEDKRQSISQRKQHTEWPIEENRIQRRAPNQSAL.

A signal peptide spans 1–19 (MIGLIVVPILFAIKGIVVG). Positions 26 to 74 (KFGKHSNTKDQKEDKDEDKRQSISQRKQHTEWPIEENRIQRRAPNQSAL) are disordered. 2 stretches are compositionally biased toward basic and acidic residues: residues 32-46 (NTKDQKEDKDEDKRQ) and 53-64 (QHTEWPIEENRI).

This is an uncharacterized protein from Saccharomyces cerevisiae (strain ATCC 204508 / S288c) (Baker's yeast).